Here is a 956-residue protein sequence, read N- to C-terminus: Glutamate receptor ionotropic, kainate 4 (956 aa).

The first 20 residues, 1-20, serve as a signal peptide directing secretion; the sequence is MPRVSAPLVLLPAWLVMVAC. The Extracellular portion of the chain corresponds to 21–545; sequence SPHSLRIAAI…YFSFLDPFSP (525 aa). N-linked (GlcNAc...) asparagine glycosylation is found at Asn158, Asn220, Asn272, Asn286, Asn323, Asn408, Asn415, and Asn479. Positions 500, 502, and 507 each coordinate L-glutamate. Residues 546-566 form a helical membrane-spanning segment; the sequence is GVWLFMLLAYLAVSCVLFLVA. The Cytoplasmic segment spans residues 567 to 623; it reads RLTPYEWYSPHPCAQGRCNLLVNQYSLGNSLWFPVGGFMQQGSTIAPRALSTRCVSG. A helical transmembrane segment spans residues 624–644; that stretch reads VWWAFTLIIISSYTANLAAFL. The Extracellular segment spans residues 645-804; sequence TVQRMDVPIE…HRAKGLGMEN (160 aa). 3 residues coordinate L-glutamate: Ser674, Ser675, and Glu723. N-linked (GlcNAc...) asparagine glycosylation occurs at Asn736. A helical membrane pass occupies residues 805-825; it reads IGGIFVVLICGLIVAIFMAML. Residues 826 to 956 are Cytoplasmic-facing; it reads EFLWTLRHSE…EKTTNSSEPE (131 aa). Disordered stretches follow at residues 863–889 and 931–956; these read RRRAAVPPPRPPIPEERRPRGTATLSN and LRARPSPARSEESLEWEKTTNSSEPE. Residues 939–948 are compositionally biased toward basic and acidic residues; it reads RSEESLEWEK.

Belongs to the glutamate-gated ion channel (TC 1.A.10.1) family. GRIK4 subfamily. Homodimer. Can form functional heteromeric receptors with GRIK1, GRIK2 and GRIK3.

Its subcellular location is the cell membrane. It is found in the postsynaptic cell membrane. It localises to the presynaptic cell membrane. Its function is as follows. Ionotropic glutamate receptor that functions as a cation-permeable ligand-gated ion channel. Cannot form functional channels on its own. Shows channel activity only in heteromeric assembly with GRIK1, GRIK2 and GRIK3 subunits. The protein is Glutamate receptor ionotropic, kainate 4 (GRIK4) of Homo sapiens (Human).